We begin with the raw amino-acid sequence, 169 residues long: Probable NADH dehydrogenase [ubiquinone] 1 alpha subcomplex subunit 5, mitochondrial (169 aa).

The transit peptide at Met-1–Leu-11 directs the protein to the mitochondrion.

This sequence belongs to the complex I NDUFA5 subunit family. As to quaternary structure, complex I is composed of at least 49 different subunits.

The protein resides in the mitochondrion inner membrane. Accessory subunit of the mitochondrial membrane respiratory chain NADH dehydrogenase (Complex I), that is believed not to be involved in catalysis. Complex I functions in the transfer of electrons from NADH to the respiratory chain. The immediate electron acceptor for the enzyme is believed to be ubiquinone. In Arabidopsis thaliana (Mouse-ear cress), this protein is Probable NADH dehydrogenase [ubiquinone] 1 alpha subcomplex subunit 5, mitochondrial.